The following is a 134-amino-acid chain: Small ribosomal subunit protein uS12 (134 aa).

Asp89 bears the 3-methylthioaspartic acid mark. The disordered stretch occupies residues 103–134 (DTAGVKDRKQGRSKYGAKRPKPGEAAATGKKK). The segment covering 113-122 (GRSKYGAKRP) has biased composition (basic residues).

It belongs to the universal ribosomal protein uS12 family. As to quaternary structure, part of the 30S ribosomal subunit. Contacts proteins S8 and S17. May interact with IF1 in the 30S initiation complex.

Its function is as follows. With S4 and S5 plays an important role in translational accuracy. Functionally, interacts with and stabilizes bases of the 16S rRNA that are involved in tRNA selection in the A site and with the mRNA backbone. Located at the interface of the 30S and 50S subunits, it traverses the body of the 30S subunit contacting proteins on the other side and probably holding the rRNA structure together. The combined cluster of proteins S8, S12 and S17 appears to hold together the shoulder and platform of the 30S subunit. The polypeptide is Small ribosomal subunit protein uS12 (Thermosynechococcus vestitus (strain NIES-2133 / IAM M-273 / BP-1)).